Reading from the N-terminus, the 261-residue chain is Small ribosomal subunit protein mS23 (261 aa).

The tract at residues 233–261 (RASSPSASWTNETEEEQKPIDQDVEEIQL) is disordered.

This sequence belongs to the mitochondrion-specific ribosomal protein mS23 family. As to quaternary structure, component of the mitochondrial small ribosomal subunit.

It is found in the mitochondrion. The polypeptide is Small ribosomal subunit protein mS23 (RSM25) (Kluyveromyces lactis (strain ATCC 8585 / CBS 2359 / DSM 70799 / NBRC 1267 / NRRL Y-1140 / WM37) (Yeast)).